A 123-amino-acid polypeptide reads, in one-letter code: Small ribosomal subunit protein uS12 (123 aa).

Residues 1 to 22 are disordered; that stretch reads MATINQLVRKPRKRKAKTSDVR. At D89 the chain carries 3-methylthioaspartic acid. The interval 101–123 is disordered; sequence ALDTSGVNDRKRGRSKYGTKRPK. Residues 111–123 are compositionally biased toward basic residues; that stretch reads KRGRSKYGTKRPK.

It belongs to the universal ribosomal protein uS12 family. In terms of assembly, part of the 30S ribosomal subunit. Contacts proteins S8 and S17. May interact with IF1 in the 30S initiation complex.

Its function is as follows. With S4 and S5 plays an important role in translational accuracy. Interacts with and stabilizes bases of the 16S rRNA that are involved in tRNA selection in the A site and with the mRNA backbone. Located at the interface of the 30S and 50S subunits, it traverses the body of the 30S subunit contacting proteins on the other side and probably holding the rRNA structure together. The combined cluster of proteins S8, S12 and S17 appears to hold together the shoulder and platform of the 30S subunit. The chain is Small ribosomal subunit protein uS12 from Teredinibacter turnerae (strain ATCC 39867 / T7901).